A 156-amino-acid polypeptide reads, in one-letter code: Probable succinate transporter subunit YjjB (156 aa).

4 helical membrane-spanning segments follow: residues 7–27, 54–74, 86–106, and 128–148; these read WALL…AMVF, FGMN…VIGI, VFTV…TAMI, and FLKA…PGLW.

This sequence belongs to the ThrE exporter (TC 2.A.79) family. The transporter is composed of YjjB and YjjP.

Its subcellular location is the cell inner membrane. In terms of biological role, involved in succinate export with YjjP. Both proteins are required for export. In Yersinia pseudotuberculosis serotype I (strain IP32953), this protein is Probable succinate transporter subunit YjjB.